The following is a 567-amino-acid chain: Amino-acid acetyltransferase, mitochondrial (567 aa).

The 167-residue stretch at 392-558 (KDSPQTNPLH…ARLKEYAKHI (167 aa)) folds into the N-acetyltransferase domain.

This sequence belongs to the acetyltransferase family.

The protein resides in the mitochondrion. It carries out the reaction L-glutamate + acetyl-CoA = N-acetyl-L-glutamate + CoA + H(+). Its pathway is amino-acid biosynthesis; L-arginine biosynthesis; N(2)-acetyl-L-ornithine from L-glutamate: step 1/4. N-acetylglutamate synthase involved in arginine biosynthesis. This is Amino-acid acetyltransferase, mitochondrial (ARG2) from Vanderwaltozyma polyspora (strain ATCC 22028 / DSM 70294 / BCRC 21397 / CBS 2163 / NBRC 10782 / NRRL Y-8283 / UCD 57-17) (Kluyveromyces polysporus).